The chain runs to 170 residues: Large ribosomal subunit protein uL16 (170 aa).

It belongs to the universal ribosomal protein uL16 family.

This chain is Large ribosomal subunit protein uL16, found in Methanoculleus marisnigri (strain ATCC 35101 / DSM 1498 / JR1).